The sequence spans 270 residues: Fibroblast growth factor 5 (270 aa).

An N-terminal signal peptide occupies residues 1–20; sequence MSLSFLLLLFLSHLILSAWA. Residues 25 to 86 form a disordered region; that stretch reads RLAPKGQPGP…EQSSFQWSPS (62 aa). A compositionally biased stretch (low complexity) spans 41 to 69; the sequence is PGGASSRRSSSSTATSSSSPASSSSAASR. The segment covering 76 to 86 has biased composition (polar residues); that stretch reads LEQSSFQWSPS. Residue asparagine 112 is glycosylated (N-linked (GlcNAc...) asparagine). The interval 237–257 is disordered; sequence EKKKPPNPVKPKVPLSAPRRS.

It belongs to the heparin-binding growth factors family. As to quaternary structure, interacts with FGFR1 and FGFR2. Affinity between fibroblast growth factors (FGFs) and their receptors is increased by heparan sulfate glycosaminoglycans that function as coreceptors.

It localises to the secreted. Plays an important role in the regulation of cell proliferation and cell differentiation. Required for normal regulation of the hair growth cycle. Functions as an inhibitor of hair elongation by promoting progression from anagen, the growth phase of the hair follicle, into catagen the apoptosis-induced regression phase. In Bos taurus (Bovine), this protein is Fibroblast growth factor 5 (FGF5).